Consider the following 200-residue polypeptide: NADH-quinone oxidoreductase subunit B 2 (200 aa).

Residues Cys79, Cys80, Cys144, and Cys174 each contribute to the [4Fe-4S] cluster site.

Belongs to the complex I 20 kDa subunit family. In terms of assembly, NDH-1 is composed of 14 different subunits. Subunits NuoB, C, D, E, F, and G constitute the peripheral sector of the complex. [4Fe-4S] cluster is required as a cofactor.

It is found in the cell inner membrane. The catalysed reaction is a quinone + NADH + 5 H(+)(in) = a quinol + NAD(+) + 4 H(+)(out). NDH-1 shuttles electrons from NADH, via FMN and iron-sulfur (Fe-S) centers, to quinones in the respiratory chain. The immediate electron acceptor for the enzyme in this species is believed to be ubiquinone. Couples the redox reaction to proton translocation (for every two electrons transferred, four hydrogen ions are translocated across the cytoplasmic membrane), and thus conserves the redox energy in a proton gradient. The protein is NADH-quinone oxidoreductase subunit B 2 of Rhodopseudomonas palustris (strain BisA53).